Consider the following 99-residue polypeptide: Large ribosomal subunit protein bL28 (99 aa).

The protein belongs to the bacterial ribosomal protein bL28 family.

In Rhizobium leguminosarum bv. trifolii (strain WSM2304), this protein is Large ribosomal subunit protein bL28.